Reading from the N-terminus, the 600-residue chain is ATP-dependent ubiquitin transferase-like protein Cap2 (600 aa).

The segment at 1 to 158 is E2-like domain; sequence MSTVVQQVPA…QEKLATTGDA (158 aa). The For E2-like domain role is filled by cysteine 109. A linker domain region spans residues 159–373; sequence VELPAFPDQS…DQLRTRGEAA (215 aa). The interval 375–600 is adenylation plus E1-like domain; the sequence is DIRSKKVLII…GTVEKEPHEY (226 aa). Cysteine 548 functions as the For E1-like domain in the catalytic mechanism.

In the C-terminal section; belongs to the HesA/MoeB/ThiF family. In terms of assembly, crystallizes as a Cap2 homodimer bound on each side by a CdnD monomer.

In terms of biological role, CD-NTase priming component of a CBASS antiviral system. CBASS (cyclic oligonucleotide-based antiphage signaling system) provides immunity against bacteriophages. The CD-NTase protein (CdnD) synthesizes cyclic nucleotides in response to infection; these serve as specific second messenger signals. The signals activate a diverse range of effectors, leading to bacterial cell death and thus abortive phage infection. A type II-C(AAG) CBASS system. Its function is as follows. Primes CdnD; acts as a protein transferase, conjugating CdnD, the CD-NTase, to unidentified target(s) in the cell via an E1-E2 ubiquitin transferase-like mechanism. Upon phage infection CdnD activates and makes cyclic nucleotides. During the conjugation reaction CdnD is transiently attached to AMP. Protein conjugation requires ATP. Functionally, protects E.coli against phage T2 infection. When the cdnD-cap2-cap3-cap4 operon is introduced in E.coli there is a more than 10(3) decrease in the efficiency of T2 plaque formation. The operon does not protect against phage T5 and only about 10-fold against T7. The chain is ATP-dependent ubiquitin transferase-like protein Cap2 from Enterobacter hormaechei subsp. hoffmannii (strain UCI 50).